A 157-amino-acid polypeptide reads, in one-letter code: Transcriptional repressor NrdR (157 aa).

Residues 1–11 are compositionally biased toward polar residues; the sequence is MQCPSCQNTDS. The tract at residues 1-21 is disordered; the sequence is MQCPSCQNTDSRVLESRSADT. A zinc finger spans residues 3–34; the sequence is CPSCQNTDSRVLESRSADTGKSVRRRRECLNC. Positions 49–139 constitute an ATP-cone domain; that stretch reads ITVIKRSESK…VYRQFNGIND (91 aa).

Belongs to the NrdR family. It depends on Zn(2+) as a cofactor.

Its function is as follows. Negatively regulates transcription of bacterial ribonucleotide reductase nrd genes and operons by binding to NrdR-boxes. The polypeptide is Transcriptional repressor NrdR (Prochlorococcus marinus (strain MIT 9211)).